The sequence spans 407 residues: Phosphopentomutase (407 aa).

Mn(2+) is bound by residues D10, D306, H311, D347, H348, and H359.

This sequence belongs to the phosphopentomutase family. Mn(2+) serves as cofactor.

It is found in the cytoplasm. It carries out the reaction 2-deoxy-alpha-D-ribose 1-phosphate = 2-deoxy-D-ribose 5-phosphate. The enzyme catalyses alpha-D-ribose 1-phosphate = D-ribose 5-phosphate. It functions in the pathway carbohydrate degradation; 2-deoxy-D-ribose 1-phosphate degradation; D-glyceraldehyde 3-phosphate and acetaldehyde from 2-deoxy-alpha-D-ribose 1-phosphate: step 1/2. Functionally, isomerase that catalyzes the conversion of deoxy-ribose 1-phosphate (dRib-1-P) and ribose 1-phosphate (Rib-1-P) to deoxy-ribose 5-phosphate (dRib-5-P) and ribose 5-phosphate (Rib-5-P), respectively. This Edwardsiella ictaluri (strain 93-146) protein is Phosphopentomutase.